We begin with the raw amino-acid sequence, 401 residues long: MLRGTYLFGYAFFFTVGIIHISTGSLTPFLLEAFNKTTDDISVIIFFQFTGFLSGVLIAPLMIKKYSHFRTLTLALTIMLVALSIFFLTKDWYYIIVMAFLLGYGAGTLETTVGSFVIANFESNAEKMSKLEVLFGLGALSFPLLINSFIDINNWFLPYYCIFTFLFVLFVGWLIFLSKNREYAKNANQQVTFPDGGAFQYFIGDRKKSKQLGFFVFFAFLYAGIETNFANFLPSIMINQDNEQISLISVSFFWVGIIIGRILIGFVSRRLDFSKYLLFSCSCLIVLLIAFSYISNPILQLSGTFLIGLSIAGIFPIALTLASIIIQKYVDEVTSLFIASASFGGAIISFLIGWSLNQDTILLTMGIFTTMAVILVGISVKIRRTKTEDPISLENKASKTQ.

12 helical membrane-spanning segments follow: residues 11 to 31, 43 to 63, 78 to 98, 99 to 119, 132 to 152, 156 to 176, 212 to 232, 247 to 267, 278 to 298, 306 to 326, 336 to 356, and 360 to 380; these read AFFF…PFLL, VIIF…PLMI, IMLV…IIVM, AFLL…FVIA, EVLF…FIDI, FLPY…WLIF, LGFF…FANF, LISV…IGFV, LFSC…SNPI, LIGL…SIII, LFIA…GWSL, and TILL…GISV.

The protein belongs to the major facilitator superfamily.

The protein resides in the cell membrane. Functionally, can transport glucose, mannose, 2-deoxyglucose and methyl alpha-glucoside, but not galactose. This Bacillus subtilis (strain 168) protein is Glucose/mannose transporter GlcP (glcP).